We begin with the raw amino-acid sequence, 439 residues long: D-erythronate kinase (439 aa).

ATP-binding positions include Ser253, 366-369 (GGDV), and Gly412.

The protein belongs to the four-carbon acid sugar kinase family.

The enzyme catalyses D-erythronate + ATP = 4-phospho-D-erythronate + ADP + H(+). Catalyzes the ATP-dependent phosphorylation of D-erythronate to D-erythronate 4-phosphate. Can also phosphorylate D-threonate and 4-hydroxy-L-threonine, with lower efficiency. The polypeptide is D-erythronate kinase (Heliobacterium modesticaldum (strain ATCC 51547 / Ice1)).